We begin with the raw amino-acid sequence, 649 residues long: Cysteine-rich receptor-like protein kinase 2 (649 aa).

A signal peptide spans 1–29; sequence MKKEPVHILPLYLPCLLMFLLSSLRQITG. Residues 30–258 lie on the Extracellular side of the membrane; the sequence is DARARAVKVT…IPRNGRSRGS (229 aa). 2 Gnk2-homologous domains span residues 33 to 134 and 139 to 245; these read ARAV…NYSF and KGPE…DQDF. N-linked (GlcNAc...) asparagine glycans are attached at residues N47, N131, N149, N154, and N214. Residues 259 to 279 traverse the membrane as a helical segment; the sequence is VVVIVVSVLSSVVVFMIGVAV. At 280-649 the chain is on the cytoplasmic side; sequence SVYICKRRTI…TVSQSSFYGR (370 aa). A Protein kinase domain is found at 325 to 608; it reads FDNANKLGQG…HMLKNKEEVL (284 aa). ATP contacts are provided by residues 331–339 and K353; that span reads LGQGGFGTV. A Phosphotyrosine modification is found at Y398. D450 serves as the catalytic Proton acceptor. S454 and S483 each carry phosphoserine. Phosphothreonine is present on residues T484 and T489. Position 497 is a phosphotyrosine (Y497).

It belongs to the protein kinase superfamily. Ser/Thr protein kinase family. CRK subfamily.

It is found in the membrane. It carries out the reaction L-seryl-[protein] + ATP = O-phospho-L-seryl-[protein] + ADP + H(+). It catalyses the reaction L-threonyl-[protein] + ATP = O-phospho-L-threonyl-[protein] + ADP + H(+). In Arabidopsis thaliana (Mouse-ear cress), this protein is Cysteine-rich receptor-like protein kinase 2 (CRK2).